The sequence spans 241 residues: Uridylate kinase (241 aa).

14-17 (KLSG) serves as a coordination point for ATP. Position 56 (G56) interacts with UMP. The ATP site is built by G57 and R61. Residues D77 and 138-145 (TGNPFFTT) contribute to the UMP site. ATP-binding residues include T165, Y171, and D174.

The protein belongs to the UMP kinase family. In terms of assembly, homohexamer.

The protein resides in the cytoplasm. It carries out the reaction UMP + ATP = UDP + ADP. The protein operates within pyrimidine metabolism; CTP biosynthesis via de novo pathway; UDP from UMP (UMPK route): step 1/1. With respect to regulation, inhibited by UTP. Catalyzes the reversible phosphorylation of UMP to UDP. The protein is Uridylate kinase of Psychrobacter arcticus (strain DSM 17307 / VKM B-2377 / 273-4).